A 331-amino-acid polypeptide reads, in one-letter code: High-affinity nickel-transport protein NixA (331 aa).

Residues 1–5 (MKLWF) are Cytoplasmic-facing. A helical transmembrane segment spans residues 6–26 (PYFLAIVFLHALGLALLFMAN). The Periplasmic portion of the chain corresponds to 27–33 (NASFYAA). The helical transmembrane segment at 34–54 (ASMAYMLGAKHAFDADHIACI) threads the bilayer. Residues 55–66 (DNTIRKLTQQGK) lie on the Cytoplasmic side of the membrane. A helical transmembrane segment spans residues 67–87 (NAYGVGFYFSMGHSSVVILMT). Topologically, residues 88–113 (IISAFAIAWAKEHTPMLEEIGGVVGT) are periplasmic. The chain crosses the membrane as a helical span at residues 114-135 (LVSGLFLLIIGLLNAIILLDLL). Over 136–178 (KIFKKSHSNESLSQQQNEEIERLLTSRGLLNRFFKPLFNFVSK) the chain is Cytoplasmic. A helical transmembrane segment spans residues 179 to 199 (SWHIYPIGFLFGLGFDTASEI). Over 200-225 (ALLALSSSAIKVSMVGMLSLPILFAA) the chain is Periplasmic. Residues 226–246 (GMSLFDTLDGAFMLKAYDWAF) form a helical membrane-spanning segment. Topologically, residues 247–252 (KTPLRK) are cytoplasmic. Residues 253–273 (IYYNISITALSVFIALFIGLI) form a helical membrane-spanning segment. Residues 274–302 (ELFQVVSEKLHLKFENRLLRALQSLEFTD) lie on the Periplasmic side of the membrane. Residues 303–322 (LGYYLVGLFVIAFLGSFFLW) traverse the membrane as a helical segment. Over 323–331 (KIKFSKLES) the chain is Cytoplasmic.

The protein belongs to the NiCoT transporter (TC 2.A.52) family.

It localises to the cell inner membrane. In terms of biological role, high-affinity nickel intake protein. Imports nickel ions in an energy-dependent fashion. Necessary for the expression of catalytically active urease. The polypeptide is High-affinity nickel-transport protein NixA (nixA) (Helicobacter pylori (strain ATCC 700392 / 26695) (Campylobacter pylori)).